The sequence spans 410 residues: Lipoyl synthase, mitochondrial (410 aa).

[4Fe-4S] cluster-binding residues include Cys-125, Cys-130, Cys-136, Cys-157, Cys-161, Cys-164, and Ser-373. Positions 140 to 362 (SDEEGTATAT…EKEAMDMGFL (223 aa)) constitute a Radical SAM core domain.

This sequence belongs to the radical SAM superfamily. Lipoyl synthase family. It depends on [4Fe-4S] cluster as a cofactor.

It is found in the mitochondrion. It catalyses the reaction [[Fe-S] cluster scaffold protein carrying a second [4Fe-4S](2+) cluster] + N(6)-octanoyl-L-lysyl-[protein] + 2 oxidized [2Fe-2S]-[ferredoxin] + 2 S-adenosyl-L-methionine + 4 H(+) = [[Fe-S] cluster scaffold protein] + N(6)-[(R)-dihydrolipoyl]-L-lysyl-[protein] + 4 Fe(3+) + 2 hydrogen sulfide + 2 5'-deoxyadenosine + 2 L-methionine + 2 reduced [2Fe-2S]-[ferredoxin]. The protein operates within protein modification; protein lipoylation via endogenous pathway; protein N(6)-(lipoyl)lysine from octanoyl-[acyl-carrier-protein]: step 2/2. Its function is as follows. Catalyzes the radical-mediated insertion of two sulfur atoms into the C-6 and C-8 positions of the octanoyl moiety bound to the lipoyl domains of lipoate-dependent enzymes, thereby converting the octanoylated domains into lipoylated derivatives. The polypeptide is Lipoyl synthase, mitochondrial (Leishmania major).